The chain runs to 662 residues: Glycogen debranching enzyme (662 aa).

Residue Asp-338 is the Nucleophile of the active site. Catalysis depends on Glu-373, which acts as the Proton donor.

The protein belongs to the glycosyl hydrolase 13 family.

The enzyme catalyses Hydrolysis of (1-&gt;6)-alpha-D-glucosidic linkages to branches with degrees of polymerization of three or four glucose residues in limit dextrin.. It functions in the pathway glycan degradation; glycogen degradation. Functionally, removes maltotriose and maltotetraose chains that are attached by 1,6-alpha-linkage to the limit dextrin main chain, generating a debranched limit dextrin. In Yersinia pseudotuberculosis serotype I (strain IP32953), this protein is Glycogen debranching enzyme.